The primary structure comprises 414 residues: Putative transporter AmpG 4 (414 aa).

The next 12 helical transmembrane spans lie at 15 to 35 (IFIL…TLSV), 44 to 63 (IAVI…KVFW), 84 to 104 (WLIL…KENP), 109 to 129 (TSLY…DIAV), 150 to 170 (VFGY…LAEI), 177 to 197 (LTFV…ITVN), 230 to 250 (FAVT…MLGA), 268 to 288 (IIAK…GGIV), 295 to 315 (FKGL…FIWL), 324 to 344 (ALLI…TALV), 360 to 379 (YALL…IYAG), and 389 to 409 (GFFI…MYLN).

Belongs to the major facilitator superfamily.

The protein localises to the cell inner membrane. The chain is Putative transporter AmpG 4 (ampG4) from Rickettsia felis (strain ATCC VR-1525 / URRWXCal2) (Rickettsia azadi).